The sequence spans 141 residues: Large ribosomal subunit protein uL11 (141 aa).

The protein belongs to the universal ribosomal protein uL11 family. As to quaternary structure, part of the ribosomal stalk of the 50S ribosomal subunit. Interacts with L10 and the large rRNA to form the base of the stalk. L10 forms an elongated spine to which L12 dimers bind in a sequential fashion forming a multimeric L10(L12)X complex. One or more lysine residues are methylated.

Forms part of the ribosomal stalk which helps the ribosome interact with GTP-bound translation factors. This Geobacter sulfurreducens (strain ATCC 51573 / DSM 12127 / PCA) protein is Large ribosomal subunit protein uL11.